The primary structure comprises 237 residues: DCN1-like protein 5 (237 aa).

Phosphoserine is present on residues Ser9, Ser41, and Ser48. Positions 46 to 232 constitute a DCUN1 domain; the sequence is FSSKKCLAWF…LLDEFVEWQK (187 aa).

Part of a complex that contains DCUN1D5, CUL1 and RBX1; this interaction is bridged by CUL1. Interacts (via the DCUN1 domain) with the unneddylated cullins: interacts with CUL1, CUL2, CUL3, CUL4A, CUL4B and CUL5; these interactions promote the cullin neddylation and the identity of the cullin dictates the affinity of the interaction. Interacts (via DCUN1 domain) with UBE2M (N-terminally acetylated form) and probably with UBE2F (N-terminally acetylated form). May also interact with regulators or subunits of cullin-RING ligases such as RBX1, RNF7, ELOB and DDB1; these interactions are bridged by cullins. Interacts with CAND1; this interaction is bridged by cullins and strongly inhibits the neddylation of cullins. These CAND-cullin-DCNL complexes can only be neddylated in the presence of a substrate adapter. Phosphorylation at Ser-41 is independent of cullin's interaction. Phosphorylated in response to both TICAM1 and MYD88 dependent Toll-like receptor (TLR) pathway activation. Phosphorylated in response to IL1B stimulation. Weakly expressed in testis, skin and immune tissues (thymus, spleen and lymph nodes).

Its subcellular location is the nucleus. The protein resides in the cytoplasm. It localises to the cytoskeleton. The protein localises to the spindle. Its function is as follows. Contributes to the neddylation of all cullins by transferring NEDD8 from N-terminally acetylated NEDD8-conjugating E2s enzyme to different cullin C-terminal domain-RBX complexes which is necessary for the activation of cullin-RING E3 ubiquitin ligases (CRLs). May play a role in DNA damage response and may participate in cell proliferation and anchorage-independent cell growth. The chain is DCN1-like protein 5 from Homo sapiens (Human).